Consider the following 314-residue polypeptide: MIEIEKPRIETIEVSEDAKFGKFVVEPLERGYGTTLGNSLRRILLSSLPGAAVKYIEIEGVLHEFSAVDNVVEDVSTIIMNIKKLALKIYSEEDKTLEIDVKDEGEVTASDITHDSDVEILNPELKIATVSKGGHLKVRLVANKGRGYALAEQNNTSDLPIGVIPVDSLYSPVERVNYTVENTRVGQSSDFDKLTLDVWTNGSITPQESVSLAAKIMTEHLNIFVSLTDEAQNAEIMIEKEEDQKEKVLEMSIEELDLSVRSYNCLKRAGINSVQELADKSEADMMKVRNLGRKSLEEVKYKLEDLGLGLRKED.

The alpha N-terminal domain (alpha-NTD) stretch occupies residues 1–228 (MIEIEKPRIE…EHLNIFVSLT (228 aa)). Residues 245-314 (KEKVLEMSIE…DLGLGLRKED (70 aa)) are alpha C-terminal domain (alpha-CTD).

It belongs to the RNA polymerase alpha chain family. In terms of assembly, homodimer. The RNAP catalytic core consists of 2 alpha, 1 beta, 1 beta' and 1 omega subunit. When a sigma factor is associated with the core the holoenzyme is formed, which can initiate transcription.

It carries out the reaction RNA(n) + a ribonucleoside 5'-triphosphate = RNA(n+1) + diphosphate. DNA-dependent RNA polymerase catalyzes the transcription of DNA into RNA using the four ribonucleoside triphosphates as substrates. This is DNA-directed RNA polymerase subunit alpha from Staphylococcus epidermidis (strain ATCC 35984 / DSM 28319 / BCRC 17069 / CCUG 31568 / BM 3577 / RP62A).